Reading from the N-terminus, the 145-residue chain is Large ribosomal subunit protein uL11 (145 aa).

The protein belongs to the universal ribosomal protein uL11 family. Part of the ribosomal stalk of the 50S ribosomal subunit. Interacts with L10 and the large rRNA to form the base of the stalk. L10 forms an elongated spine to which L12 dimers bind in a sequential fashion forming a multimeric L10(L12)X complex. One or more lysine residues are methylated.

In terms of biological role, forms part of the ribosomal stalk which helps the ribosome interact with GTP-bound translation factors. The protein is Large ribosomal subunit protein uL11 of Rubrobacter xylanophilus (strain DSM 9941 / JCM 11954 / NBRC 16129 / PRD-1).